The following is a 73-amino-acid chain: Putative membrane protein insertion efficiency factor (73 aa).

It belongs to the UPF0161 family.

Its subcellular location is the cell inner membrane. Could be involved in insertion of integral membrane proteins into the membrane. This is Putative membrane protein insertion efficiency factor from Neisseria meningitidis serogroup C / serotype 2a (strain ATCC 700532 / DSM 15464 / FAM18).